The following is a 71-amino-acid chain: Ubiquinol-cytochrome c reductase complex assembly factor 6 (71 aa).

At M1 to S8 the chain is on the mitochondrial matrix side. A helical; Signal-anchor for type II membrane protein membrane pass occupies residues T9–A25. The Mitochondrial intermembrane segment spans residues E26–K71. The tract at residues L52–K71 is disordered.

It belongs to the UQCC6 family. As to quaternary structure, interacts with UQCRC1. Interacts with UQCRQ. Interacts with UQCC5. Forms a complex, named COMB/coordinator of mitochondrial CYTB biogenesis, composed of UQCC1, UQCC2, UQCC4, UQCC5 and UQCC6; stabilizes nascent cytochrome b/MT-CYB and promotes its membrane insertion. Forms a complex, named COMA, composed of UQCC1, UQCC2 and UQCC4; activates MT-CYB translation. Forms a complex, named COMC, composed of UQCC1, UQCC2; UQCC3 and UQCC4; mediates MT-CYB hemylation and association with the first nuclear-encoded complex III subunit UQCRQ. Interacts with MT-CYB.

Its subcellular location is the mitochondrion inner membrane. Required for the assembly and stability of the mitochondrial ubiquinol-cytochrome c reductase complex (complex III (CIII) or cytochrome b-c1 complex), a multisubunit transmembrane complex that is part of the mitochondrial electron transport chain (ETC) which drives oxidative phosphorylation. Mediates early complex III biogenesis. Participates in regulating the levels of electron transport chain proteins, and therefore energy supply, in response to changes in energy demand. Also required for cytochrome c oxidase complex (complex IV) assembly. The sequence is that of Ubiquinol-cytochrome c reductase complex assembly factor 6 from Pongo abelii (Sumatran orangutan).